Reading from the N-terminus, the 220-residue chain is Charged multivesicular body protein 3 (220 aa).

The N-myristoyl glycine moiety is linked to residue Gly2. The stretch at 22–54 (KIRKEMRVIDRQIRDIQREQEKVKRSIKESAKK) forms a coiled coil. Residues 168-169 (IL) are important for autoinhibitory function. The disordered stretch occupies residues 196 to 220 (AMAASDEEEEEDLEAMQSRLAALRS). Positions 197-220 (MAASDEEEEEDLEAMQSRLAALRS) form a coiled coil. Acidic residues predominate over residues 200 to 209 (SDEEEEEDLE). The MIT-interacting motif signature appears at 201–209 (DEEEEEDLE). Interaction with STAMBP regions lie at residues 203–207 (EEEED) and 219–220 (RS).

Belongs to the SNF7 family. As to quaternary structure, probable core component of the endosomal sorting required for transport complex III (ESCRT-III). ESCRT-III components are thought to multimerize to form a flat lattice on the perimeter membrane of the endosome. Several assembly forms of ESCRT-III may exist that interact and act sequentially.

It is found in the cytoplasm. The protein localises to the cytosol. The protein resides in the membrane. Its subcellular location is the endosome. It localises to the late endosome membrane. Probable core component of the endosomal sorting required for transport complex III (ESCRT-III) which is involved in multivesicular bodies (MVBs) formation and sorting of endosomal cargo proteins into MVBs. MVBs contain intraluminal vesicles (ILVs) that are generated by invagination and scission from the limiting membrane of the endosome and mostly are delivered to lysosomes enabling degradation of membrane proteins, such as stimulated growth factor receptors, lysosomal enzymes and lipids. Involved in late stages of cytokinesis. Plays a role in endosomal sorting/trafficking of EGF receptor. The polypeptide is Charged multivesicular body protein 3 (chmp3) (Xenopus tropicalis (Western clawed frog)).